A 258-amino-acid polypeptide reads, in one-letter code: Ribonuclease HII (258 aa).

The region spanning 71–258 (ELIAGIDEVG…PIKSMVNFKY (188 aa)) is the RNase H type-2 domain. A divalent metal cation-binding residues include Asp77, Glu78, and Asp169.

Belongs to the RNase HII family. The cofactor is Mn(2+). Mg(2+) is required as a cofactor.

It is found in the cytoplasm. It carries out the reaction Endonucleolytic cleavage to 5'-phosphomonoester.. Functionally, endonuclease that specifically degrades the RNA of RNA-DNA hybrids. The sequence is that of Ribonuclease HII from Lactococcus lactis subsp. cremoris (strain SK11).